The chain runs to 304 residues: Ribokinase (304 aa).

Substrate-binding positions include 12-14, 41-45, and Glu142; these read NVD and GKGAN. Residues Asn186 and 222–227 each bind ATP; that span reads TLGKQG. K(+) is bound by residues Asp248 and Thr250. ATP is bound by residues 253–254 and Asn279; that span reads GD. Asp254 lines the substrate pocket. Asp254 acts as the Proton acceptor in catalysis. Residues Thr285, Lys288, Gly290, and Ser294 each coordinate K(+).

The protein belongs to the carbohydrate kinase PfkB family. Ribokinase subfamily. In terms of assembly, homodimer. Mg(2+) is required as a cofactor.

Its subcellular location is the cytoplasm. The catalysed reaction is D-ribose + ATP = D-ribose 5-phosphate + ADP + H(+). It functions in the pathway carbohydrate metabolism; D-ribose degradation; D-ribose 5-phosphate from beta-D-ribopyranose: step 2/2. Its activity is regulated as follows. Activated by a monovalent cation that binds near, but not in, the active site. The most likely occupant of the site in vivo is potassium. Ion binding induces a conformational change that may alter substrate affinity. Catalyzes the phosphorylation of ribose at O-5 in a reaction requiring ATP and magnesium. The resulting D-ribose-5-phosphate can then be used either for sythesis of nucleotides, histidine, and tryptophan, or as a component of the pentose phosphate pathway. The polypeptide is Ribokinase (Staphylococcus aureus (strain COL)).